A 200-amino-acid chain; its full sequence is Phospholipase A2 inhibitor CgMIP-I (200 aa).

An N-terminal signal peptide occupies residues 1–19 (MKYLHTICLLFIFVARGNS). 7 disulfide bridges follow: cysteine 22–cysteine 46, cysteine 25–cysteine 32, cysteine 39–cysteine 67, cysteine 73–cysteine 94, cysteine 95–cysteine 100, cysteine 118–cysteine 143, and cysteine 136–cysteine 165. Asparagine 176 carries N-linked (GlcNAc...) asparagine glycosylation.

Belongs to the CNF-like-inhibitor family. In terms of assembly, homomer of 110 kDa composed of 20-25-kDa subunits. Post-translationally, N-glycosylated. The glycosidic chain may contain superficial sialic acid residues. As to expression, expressed by the liver.

It is found in the secreted. In terms of biological role, inhibits the enzymatic activity of basic phospholipase A2. Specifically neutralizes PLA2, myotoxic, edema-forming, cytolytic, and anti-coagulant activities, as well as intracerebral lethal effect of the basic myotoxin I from the same venom (AC P0DQP6), crotoxin heterodimer and crotoxin subunit B alone. Does not block the enzymatic activity of crude acidic PLA2 fractions from the same venom. In Cerrophidion godmani (Porthidium godmani), this protein is Phospholipase A2 inhibitor CgMIP-I.